An 850-amino-acid polypeptide reads, in one-letter code: Protein monoglycylase TTLL8 (850 aa).

2 disordered regions span residues M1 to S29 and R228 to N254. The 359-residue stretch at S222–E580 folds into the TTL domain. ATP contacts are provided by residues K354, R360 to G361, Q392 to I395, K405 to D407, and C449 to N450. R360 lines the a protein pocket. Positions 527, 540, and 542 each coordinate Mg(2+). ATP is bound at residue E540. Residues A627–R652 form a disordered region.

Mg(2+) is required as a cofactor.

It localises to the cytoplasm. Its subcellular location is the cytoskeleton. The protein localises to the cell projection. It is found in the cilium. The protein resides in the cilium axoneme. It localises to the flagellum axoneme. The catalysed reaction is L-glutamyl-[protein] + glycine + ATP = glycyl-L-glutamyl-[protein] + ADP + phosphate + H(+). Its function is as follows. Monoglycylase which modifies both tubulin and non-tubulin proteins, adding a single glycine to the gamma-carboxyl groups of specific glutamate residues to generate monoglycine side chains within the C-terminal tail of target proteins. Not involved in elongation step of the polyglycylation reaction. Preferentially monoglycylates alpha-tubulin over beta-tubulin. Together with TTLL3, mediates microtubule glycylation of primary and motile cilia, which is essential for their stability and maintenance. Together with TTLL3, glycylates sperm flagella which regulates axonemal dynein motor activity, thereby controlling flagellar beat, directional sperm swimming and male fertility. Monoglycylates non-tubulin proteins such as ANP32A, ANP32B, SET, NCL and NAP1. The chain is Protein monoglycylase TTLL8 from Homo sapiens (Human).